The chain runs to 570 residues: Peptidyl-prolyl cis-trans isomerase FKBP9 (570 aa).

Residues 1-24 (MALGARGWRRRSLLLLLLWVTGQA) form the signal peptide. PPIase FKBP-type domains follow at residues 54-142 (GDFV…VDIW), 166-254 (SDFV…LDLH), 278-365 (GDFL…IDFH), and 389-477 (GDYL…LELV). Residues Asn174, Asn286, Asn302, and Asn397 are each glycosylated (N-linked (GlcNAc...) asparagine). EF-hand domains follow at residues 488 to 523 (WNGE…QVAT) and 533 to 568 (NAEM…AKHD). Ca(2+) is bound by residues Asp501, Asp503, Asn505, Glu507, Glu512, Asp546, Asn548, Asp550, Lys552, and Glu557. The Prevents secretion from ER motif lies at 567 to 570 (HDEL).

Phosphorylated. As to expression, predominantly expressed in heart, skeletal muscle, lung, liver and kidney. Lower levels found in brain, spleen and testis.

It localises to the endoplasmic reticulum lumen. The catalysed reaction is [protein]-peptidylproline (omega=180) = [protein]-peptidylproline (omega=0). Inhibited by FK506. Functionally, PPIases accelerate the folding of proteins during protein synthesis. The polypeptide is Peptidyl-prolyl cis-trans isomerase FKBP9 (Fkbp9) (Mus musculus (Mouse)).